The following is a 192-amino-acid chain: Fe/S biogenesis protein NfuA (192 aa).

Positions 149 and 152 each coordinate [4Fe-4S] cluster.

The protein belongs to the NfuA family. Homodimer. The cofactor is [4Fe-4S] cluster.

In terms of biological role, involved in iron-sulfur cluster biogenesis. Binds a 4Fe-4S cluster, can transfer this cluster to apoproteins, and thereby intervenes in the maturation of Fe/S proteins. Could also act as a scaffold/chaperone for damaged Fe/S proteins. In Shewanella loihica (strain ATCC BAA-1088 / PV-4), this protein is Fe/S biogenesis protein NfuA.